A 748-amino-acid chain; its full sequence is Polyribonucleotide nucleotidyltransferase (748 aa).

The Mg(2+) site is built by Asp-487 and Asp-493. Residues Pro-554–Ile-613 form the KH domain. The S1 motif domain maps to Gly-623–Lys-691. The tract at residues Ala-693–Asn-733 is disordered. Residues Ser-699–Lys-712 show a composition bias toward polar residues. The span at Asp-713–Asp-722 shows a compositional bias: basic and acidic residues.

It belongs to the polyribonucleotide nucleotidyltransferase family. Mg(2+) is required as a cofactor.

The protein localises to the cytoplasm. It catalyses the reaction RNA(n+1) + phosphate = RNA(n) + a ribonucleoside 5'-diphosphate. Its function is as follows. Involved in mRNA degradation. Catalyzes the phosphorolysis of single-stranded polyribonucleotides processively in the 3'- to 5'-direction. The protein is Polyribonucleotide nucleotidyltransferase of Rickettsia peacockii (strain Rustic).